The primary structure comprises 160 residues: Cyclic pyranopterin monophosphate synthase (160 aa).

Residues 73 to 75 and 110 to 111 each bind substrate; these read LCH and ME. Residue aspartate 125 is part of the active site.

The protein belongs to the MoaC family. Homohexamer; trimer of dimers.

The catalysed reaction is (8S)-3',8-cyclo-7,8-dihydroguanosine 5'-triphosphate = cyclic pyranopterin phosphate + diphosphate. Its pathway is cofactor biosynthesis; molybdopterin biosynthesis. In terms of biological role, catalyzes the conversion of (8S)-3',8-cyclo-7,8-dihydroguanosine 5'-triphosphate to cyclic pyranopterin monophosphate (cPMP). This chain is Cyclic pyranopterin monophosphate synthase, found in Pseudomonas aeruginosa (strain LESB58).